Here is a 750-residue protein sequence, read N- to C-terminus: Photosystem I P700 chlorophyll a apoprotein A1 (750 aa).

A run of 8 helical transmembrane segments spans residues 70 to 93, 156 to 179, 195 to 219, 291 to 309, 346 to 369, 385 to 411, 433 to 455, and 531 to 549; these read VFSA…FHGA, LYCT…FHYH, LNHH…HVSL, IAHH…GHMY, WHAQ…HHMY, LSLF…IFMV, AIIS…LYIH, and FLVH…LILL. [4Fe-4S] cluster-binding residues include cysteine 573 and cysteine 582. 2 consecutive transmembrane segments (helical) span residues 589 to 610 and 664 to 686; these read HVFL…HFSW and LSAY…MFLF. Histidine 675 lines the chlorophyll a' pocket. The chlorophyll a site is built by methionine 683 and tyrosine 691. Phylloquinone is bound at residue tryptophan 692. A helical transmembrane segment spans residues 724 to 744; that stretch reads AVGVTHYLLGGIATTWAFFLA.

This sequence belongs to the PsaA/PsaB family. The PsaA/B heterodimer binds the P700 chlorophyll special pair and subsequent electron acceptors. PSI consists of a core antenna complex that captures photons, and an electron transfer chain that converts photonic excitation into a charge separation. The eukaryotic PSI reaction center is composed of at least 11 subunits. P700 is a chlorophyll a/chlorophyll a' dimer, A0 is one or more chlorophyll a, A1 is one or both phylloquinones and FX is a shared 4Fe-4S iron-sulfur center. serves as cofactor.

The protein resides in the plastid. It localises to the chloroplast thylakoid membrane. The catalysed reaction is reduced [plastocyanin] + hnu + oxidized [2Fe-2S]-[ferredoxin] = oxidized [plastocyanin] + reduced [2Fe-2S]-[ferredoxin]. PsaA and PsaB bind P700, the primary electron donor of photosystem I (PSI), as well as the electron acceptors A0, A1 and FX. PSI is a plastocyanin-ferredoxin oxidoreductase, converting photonic excitation into a charge separation, which transfers an electron from the donor P700 chlorophyll pair to the spectroscopically characterized acceptors A0, A1, FX, FA and FB in turn. Oxidized P700 is reduced on the lumenal side of the thylakoid membrane by plastocyanin. In Phalaenopsis aphrodite subsp. formosana (Moth orchid), this protein is Photosystem I P700 chlorophyll a apoprotein A1.